The sequence spans 176 residues: Inner membrane-spanning protein YciB (176 aa).

Helical transmembrane passes span 24–44, 49–69, 76–96, 119–139, and 149–169; these read TATAVAIVATLVQIAWVAFRH, PMLWVSLGVVTVFGGATLVLH, WKPTVLYWAFSVALIVSQLAF, LNVVWGVFFVLLGLVNLFVAY, and FKLFGATGCLVVFIVGQSLWL.

The protein belongs to the YciB family.

Its subcellular location is the cell inner membrane. Plays a role in cell envelope biogenesis, maintenance of cell envelope integrity and membrane homeostasis. The chain is Inner membrane-spanning protein YciB from Paraburkholderia xenovorans (strain LB400).